The primary structure comprises 347 residues: MAMPKLTYEEAGVNVQEGQRAVNLMKESVKSTFTKGVLGDIGGFGGLFALDPREMEKPILVAGTDGVGTKLKLAFMMNRHDTIGEDCVAMCVNDILCQGAKPLFFLDYIATGKLKAEVVAEIVQGIANGCKKAGCALIGGETAEMPGFYQKGEYDVAGFTVGMVEEKNLITGKEISQGDIMIGISSSGVHSNGFSLVRKLFFEDKQYSVDQYVDGLGETLGEALLRPTKIYVKPILEVLQQEKIKGMVHVTGGGFYENIPRILPEGIDANVHLDTWQAPPIFQFIQQEGQIEQDEMFSTFNMGIGMIVVVERSAGEKVVQLLQELGEEASIIGEMVRGSKQVVLCQK.

This sequence belongs to the AIR synthase family.

The protein localises to the cytoplasm. The enzyme catalyses 2-formamido-N(1)-(5-O-phospho-beta-D-ribosyl)acetamidine + ATP = 5-amino-1-(5-phospho-beta-D-ribosyl)imidazole + ADP + phosphate + H(+). It participates in purine metabolism; IMP biosynthesis via de novo pathway; 5-amino-1-(5-phospho-D-ribosyl)imidazole from N(2)-formyl-N(1)-(5-phospho-D-ribosyl)glycinamide: step 2/2. The polypeptide is Phosphoribosylformylglycinamidine cyclo-ligase (Alkaliphilus metalliredigens (strain QYMF)).